The primary structure comprises 247 residues: Homeobox-leucine zipper protein HOX17 (247 aa).

Residues 58 to 81 (ERAGLRGGGGSDEEDGGCGIDGSR) form a disordered region. Positions 79–138 (GSRKKLRLSKDQSAVLEDSFREHPTLNPRQKATLAQQLGLRPRQVEVWFQNRRARTKLKQ) form a DNA-binding region, homeobox. Residues 137–182 (KQTEVDCEFLKRCCETLTEENRRLQKEVQELRALKLVSPHLYMNMS) form a leucine-zipper region.

It belongs to the HD-ZIP homeobox family. Class II subfamily. In terms of tissue distribution, expressed in seedlings, roots, stems, leaf sheaths and blades and panicles.

The protein localises to the nucleus. Functionally, probable transcription factor. This Oryza sativa subsp. indica (Rice) protein is Homeobox-leucine zipper protein HOX17 (HOX17).